The sequence spans 348 residues: Spore wall and anchoring disk complex protein EnP1 (348 aa).

A signal peptide spans 1-16 (MKLLGLLISAFGAINA). N-linked (GlcNAc...) asparagine glycans are attached at residues Asn47, Asn139, and Asn140. Positions 193-198 (PRHGRS) match the HBM1 motif. Residues 248–256 (IRKGKDKKC) carry the HBM2 motif. The short motif at 322–327 (LKKIRG) is the HBM3 element.

It is found in the spore wall. The protein localises to the spore. Its subcellular location is the perispore. Functionally, spore wall protein involved in the adhesion to host cells surface glycoaminoglycans (GAGs). Microsporidian spore adherence is an integral part of activation and host cell infection. The polypeptide is Spore wall and anchoring disk complex protein EnP1 (EnP1) (Encephalitozoon intestinalis (Microsporidian parasite)).